A 276-amino-acid polypeptide reads, in one-letter code: Undecaprenyl-diphosphatase 2 (276 aa).

The next 8 membrane-spanning stretches (helical) occupy residues 1 to 21 (MSLW…LFPV), 44 to 64 (QLLP…LWYF), 87 to 107 (GHLM…GLLL), 114 to 134 (VFHD…LLWV), 150 to 170 (MTFK…IPGF), 190 to 210 (AAEF…VLEL), 220 to 240 (LMDA…SVRF), and 251 to 271 (LASF…WFML).

This sequence belongs to the UppP family.

It localises to the cell inner membrane. The enzyme catalyses di-trans,octa-cis-undecaprenyl diphosphate + H2O = di-trans,octa-cis-undecaprenyl phosphate + phosphate + H(+). In terms of biological role, catalyzes the dephosphorylation of undecaprenyl diphosphate (UPP). Confers resistance to bacitracin. The protein is Undecaprenyl-diphosphatase 2 of Burkholderia ambifaria (strain ATCC BAA-244 / DSM 16087 / CCUG 44356 / LMG 19182 / AMMD) (Burkholderia cepacia (strain AMMD)).